Here is a 261-residue protein sequence, read N- to C-terminus: ATP synthase subunit a (261 aa).

Positions 1–14 (MSTLSFNNISTEVL) are cleaved as a propeptide — removed in mature form. A run of 7 helical transmembrane segments spans residues 38-58 (ITNI…INLL), 96-116 (IYFP…LIGM), 126-146 (HFVV…ILGF), 153-173 (FFSL…LVLI), 191-211 (ANIL…YNIM), 214-234 (GIIF…FSGL), and 235-255 (ELGI…GYIK).

The protein belongs to the ATPase A chain family. In terms of assembly, F-type ATPases have 2 components, CF(1) - the catalytic core - and CF(0) - the membrane proton channel. CF(1) has five subunits: alpha(3), beta(3), gamma(1), delta(1), epsilon(1). CF(0) has three main subunits: a, b and c.

The protein localises to the mitochondrion inner membrane. Its function is as follows. Mitochondrial membrane ATP synthase (F(1)F(0) ATP synthase or Complex V) produces ATP from ADP in the presence of a proton gradient across the membrane which is generated by electron transport complexes of the respiratory chain. F-type ATPases consist of two structural domains, F(1) - containing the extramembraneous catalytic core and F(0) - containing the membrane proton channel, linked together by a central stalk and a peripheral stalk. During catalysis, ATP synthesis in the catalytic domain of F(1) is coupled via a rotary mechanism of the central stalk subunits to proton translocation. Key component of the proton channel; it may play a direct role in the translocation of protons across the membrane. The polypeptide is ATP synthase subunit a (atp-6) (Neurospora crassa (strain ATCC 24698 / 74-OR23-1A / CBS 708.71 / DSM 1257 / FGSC 987)).